Reading from the N-terminus, the 335-residue chain is MPTVIGFEGSANKLGIGIIRDGVVLSNPRHTYITPPGQGFMPRDTAKHHQEHAIDILRRALDEAQIRPQDIDCICYTKGPGMGAPLVAVAVVARTVAQLWKKPIIGVNHCIGHIEMGRLITGANNPTVLYVSGGNTQVIAYLQKRYRIFGETIDIAVGNCLDRFARVLKLSNDPSPGYNIEQMAKKGKKLIELPYTVKGMDVSFSGILSYIECMAHKLLSSEECTPEDLCFSLQETVFAMLVETTERAMAHCGSNEVLIVGGVGCNKRLQEMMDVMAKERGAKLYATDERFCIDNGAMIAQAGWEMFQTGSVTPLEQTTCTQRFRTDEVEVTWRD.

A divalent metal cation contacts are provided by His109, His113, and Tyr130. Residues 130–134 (YVSGG), Asp162, Gly177, Glu181, and Asn266 each bind substrate. Residue Asp294 participates in a divalent metal cation binding.

The protein belongs to the KAE1 / TsaD family. As to quaternary structure, component of the EKC/KEOPS complex; the whole complex dimerizes. A divalent metal cation is required as a cofactor.

It localises to the cytoplasm. Its subcellular location is the nucleus. It carries out the reaction L-threonylcarbamoyladenylate + adenosine(37) in tRNA = N(6)-L-threonylcarbamoyladenosine(37) in tRNA + AMP + H(+). Functionally, component of the EKC/KEOPS complex that is required for the formation of a threonylcarbamoyl group on adenosine at position 37 (t(6)A37) in tRNAs that read codons beginning with adenine. The complex is probably involved in the transfer of the threonylcarbamoyl moiety of threonylcarbamoyl-AMP (TC-AMP) to the N6 group of A37. Osgep likely plays a direct catalytic role in this reaction, but requires other protein(s) of the complex to fulfill this activity. The chain is Probable tRNA N6-adenosine threonylcarbamoyltransferase from Nematostella vectensis (Starlet sea anemone).